Reading from the N-terminus, the 664-residue chain is Intraflagellar transport protein 70A2 (664 aa).

TPR repeat units follow at residues Asp-11–Ser-44, Arg-45–Leu-78, Pro-153–Gln-186, Asp-188–Gln-220, Gln-395–Ile-423, Pro-424–His-456, and Val-458–Asn-491. The stretch at Tyr-507–Asp-534 forms a coiled coil. The stretch at Cys-543 to Lys-576 is one TPR 8 repeat.

This sequence belongs to the TTC30/dfy-1/fleer family. In terms of assembly, interacts wit the IFT B complex component IFT52.

It is found in the cell projection. The protein localises to the cilium. Functionally, required for polyglutamylation of axonemal tubulin. Plays a role in anterograde intraflagellar transport (IFT), the process by which cilia precursors are transported from the base of the cilium to the site of their incorporation at the tip. This Mus musculus (Mouse) protein is Intraflagellar transport protein 70A2 (Ift70a2).